Reading from the N-terminus, the 727-residue chain is Alpha-1,3-galactosidase A (727 aa).

The tract at residues 220 to 241 (ATNRTWRTSNPVFPERHEDHRP) is disordered. Positions 221–230 (TNRTWRTSNP) are enriched in polar residues. PbH1 repeat units lie at residues 336–358 (KGTV…NIHG), 461–483 (TPTV…LVTT), 484–506 (RRPV…YISS), 517–538 (VRNV…IFFD), 551–572 (HRNV…LSGR), and 574–603 (VGGL…RVGD).

The protein belongs to the glycosyl hydrolase 110 family. A subfamily.

The enzyme catalyses Hydrolysis of terminal, non-reducing branched (1-&gt;3)-alpha-D-galactosidic residues, producing free D-galactose.. It carries out the reaction Hydrolysis of terminal, non-reducing alpha-D-galactose residues in alpha-D-galactosides, including galactose oligosaccharides, galactomannans and galactolipids.. In terms of biological role, alpha-galactosidase that specifically removes branched alpha-1,3-linked galactose residues present in blood group B antigens. Has no activity toward linear alpha-1,3-linked galactose residues. The sequence is that of Alpha-1,3-galactosidase A (glaA) from Peterkaempfera griseoplana (Streptacidiphilus griseoplanus).